Here is a 493-residue protein sequence, read N- to C-terminus: Chromosomal replication initiator protein DnaA (493 aa).

The domain I, interacts with DnaA modulators stretch occupies residues 1–105 (MSDTIQQEAP…LMYSIVIDKS (105 aa)). A domain II region spans residues 105 to 152 (SQGQPVTIELPHQIDAAPAERSVRPEAPGQKASAERERLEIARPRFES). The segment at 121–140 (APAERSVRPEAPGQKASAER) is disordered. The interval 153-370 (NLNPKYTFST…GCIVKLLAAH (218 aa)) is domain III, AAA+ region. Positions 198, 200, 201, and 202 each coordinate ATP. Positions 371–493 (SLDNQEIDLQ…LRKRIEIMSM (123 aa)) are domain IV, binds dsDNA.

The protein belongs to the DnaA family. Oligomerizes as a right-handed, spiral filament on DNA at oriC.

The protein resides in the cytoplasm. In terms of biological role, plays an essential role in the initiation and regulation of chromosomal replication. ATP-DnaA binds to the origin of replication (oriC) to initiate formation of the DNA replication initiation complex once per cell cycle. Binds the DnaA box (a 9 base pair repeat at the origin) and separates the double-stranded (ds)DNA. Forms a right-handed helical filament on oriC DNA; dsDNA binds to the exterior of the filament while single-stranded (ss)DNA is stabiized in the filament's interior. The ATP-DnaA-oriC complex binds and stabilizes one strand of the AT-rich DNA unwinding element (DUE), permitting loading of DNA polymerase. After initiation quickly degrades to an ADP-DnaA complex that is not apt for DNA replication. Binds acidic phospholipids. The chain is Chromosomal replication initiator protein DnaA from Chlorobaculum tepidum (strain ATCC 49652 / DSM 12025 / NBRC 103806 / TLS) (Chlorobium tepidum).